The following is a 297-amino-acid chain: MTEIIDGNAVAQSIRDDLVASIDRLADAGHRPSLATVLMSEDPASETYVSMKQDDCEEVGIEAIDIDIDSDADAAELYDTIEDLNADEDVNGILVQMPVPDHVEDRSVLRAIDPMKDVDGFHPENVGRLVAGDARYKPCTPHGIQKLIESAGVDTEGKDAVVVGRSDIVGKPMANLLIQKAPGGNATTTVCHSRTENLAERTRNADILVAAAGVPEMIDGKMIQEGATVIDVGINRVDADTEKGYELVGDVEYESAKEVAGAITPVPGGVGPMTRAMLLYNTVKATGLQHDIDVDLP.

NADP(+) contacts are provided by residues 164–166 (GRS), S193, and I234.

The protein belongs to the tetrahydrofolate dehydrogenase/cyclohydrolase family. Homodimer.

The catalysed reaction is (6R)-5,10-methylene-5,6,7,8-tetrahydrofolate + NADP(+) = (6R)-5,10-methenyltetrahydrofolate + NADPH. It carries out the reaction (6R)-5,10-methenyltetrahydrofolate + H2O = (6R)-10-formyltetrahydrofolate + H(+). It participates in one-carbon metabolism; tetrahydrofolate interconversion. Its function is as follows. Catalyzes the oxidation of 5,10-methylenetetrahydrofolate to 5,10-methenyltetrahydrofolate and then the hydrolysis of 5,10-methenyltetrahydrofolate to 10-formyltetrahydrofolate. This chain is Bifunctional protein FolD 1, found in Haloarcula marismortui (strain ATCC 43049 / DSM 3752 / JCM 8966 / VKM B-1809) (Halobacterium marismortui).